The primary structure comprises 228 residues: General odorant-binding protein 71 (228 aa).

The first 20 residues, 1-20, serve as a signal peptide directing secretion; that stretch reads MCGAIVLLLLVGTSPAPVEG. A disordered region spans residues 50–131; the sequence is TMGEWGQRDR…GNSSSSSSST (82 aa). Positions 55–72 are enriched in basic and acidic residues; the sequence is GQRDRNGEEQQMMRDYGR. Over residues 83-99 the composition is skewed to low complexity; sequence GGQTSGSSSSGSAGEHS. Over residues 111–120 the composition is skewed to gly residues; it reads AGQGGNGTRS. The span at 121 to 131 shows a compositional bias: low complexity; sequence GGNSSSSSSST. 2 disulfide bridges follow: Cys-138/Cys-199 and Cys-185/Cys-208.

Belongs to the PBP/GOBP family.

It is found in the secreted. Its function is as follows. Present in the aqueous fluid surrounding olfactory sensory dendrites and are thought to aid in the capture and transport of hydrophobic odorants into and through this fluid. The chain is General odorant-binding protein 71 (Obp71) from Anopheles gambiae (African malaria mosquito).